The sequence spans 235 residues: (5-formylfuran-3-yl)methyl phosphate synthase (235 aa).

Residue Lys27 is the Schiff-base intermediate with substrate of the active site. Lys86 functions as the Proton acceptor in the catalytic mechanism.

This sequence belongs to the MfnB family.

It catalyses the reaction 2 D-glyceraldehyde 3-phosphate = 4-(hydroxymethyl)-2-furancarboxaldehyde phosphate + phosphate + 2 H2O. Its pathway is cofactor biosynthesis; methanofuran biosynthesis. Catalyzes the formation of 4-(hydroxymethyl)-2-furancarboxaldehyde phosphate (4-HFC-P) from two molecules of glyceraldehyde-3-P (GA-3-P). The chain is (5-formylfuran-3-yl)methyl phosphate synthase from Archaeoglobus fulgidus (strain ATCC 49558 / DSM 4304 / JCM 9628 / NBRC 100126 / VC-16).